Here is a 188-residue protein sequence, read N- to C-terminus: UPF0301 protein XF_2228 (188 aa).

Belongs to the UPF0301 (AlgH) family.

In Xylella fastidiosa (strain 9a5c), this protein is UPF0301 protein XF_2228.